A 220-amino-acid chain; its full sequence is Large ribosomal subunit protein bL21 (220 aa).

The tract at residues serine 109–proline 158 is disordered. Positions threonine 118–lysine 146 are enriched in basic and acidic residues.

The protein belongs to the bacterial ribosomal protein bL21 family. Part of the 50S ribosomal subunit. Contacts protein L20.

Functionally, this protein binds to 23S rRNA in the presence of protein L20. The protein is Large ribosomal subunit protein bL21 of Chelativorans sp. (strain BNC1).